Here is a 673-residue protein sequence, read N- to C-terminus: Sodium/myo-inositol cotransporter 2 (673 aa).

The Extracellular portion of the chain corresponds to 1–27 (MESTTSSPQPPPSDALEAFPQKSMEPA). Residues 28–48 (DIVVLVLYFLFVLAVGLWSTV) form a helical membrane-spanning segment. At 49-56 (RTKRDTVK) the chain is on the cytoplasmic side. A helical transmembrane segment spans residues 57-77 (GYFLAGGDMVWWPVGASLFAS). A topological domain (extracellular) is located at residue Asn-78. The chain crosses the membrane as a helical span at residues 79 to 99 (VGSGHFIGLAGSGAAVGISVA). Residues 100-102 (AYE) lie on the Cytoplasmic side of the membrane. Residues 103–123 (LNGLFSVLMLAWIFLPIYIAG) traverse the membrane as a helical segment. Residues 124 to 180 (QVTTMPEYLKRRFGGSRIPITLASIYPSTHSLTILQVDMYAGAIFIQQSLHLDLYLA) lie on the Extracellular side of the membrane. A helical transmembrane segment spans residues 181 to 201 (IVGLLAVTALYTVAGGLAAVI). The Cytoplasmic segment spans residues 202-208 (YTDALQT). A helical membrane pass occupies residues 209-229 (VIMLIGAFILMGYSFAAVGGM). The Extracellular segment spans residues 230-272 (EGLKDQYFLALASNRSENSSCGLPREDAFHIFRDPLTSDLPWP). The helical transmembrane segment at 273-293 (GILFGMSIPSLWYWCTDQVIV) threads the bilayer. At 294 to 308 (QRSLAAKNLSHAKGG) the chain is on the cytoplasmic side. Residues 309 to 329 (SLMAAYLKVLPLFLMVFPGMV) form a helical membrane-spanning segment. Residues 330–375 (SRILFPDQVACAHPDICQRVCSNPSGCSDIAYPKLVLELLPTGLRG) are Extracellular-facing. A helical transmembrane segment spans residues 376-396 (LMMAVMVAALMSSLTSIFNSA). At 397-418 (STIFTMDLWHHIRPRASERELM) the chain is on the cytoplasmic side. A helical transmembrane segment spans residues 419 to 439 (IVGRVFVLALVLVSILWIPVV). Over 440-446 (QASQGGQ) the chain is Extracellular. Residues 447–467 (LFIYIQSISSYLQPPVAVVFI) form a helical membrane-spanning segment. Residues 468–479 (MGCFWKRTNEKG) are Cytoplasmic-facing. The chain crosses the membrane as a helical span at residues 480–500 (AFSGLILGLLLGLVRLILDFV). Over 501–521 (YVQPRCDQPDDRPAVVKDVHY) the chain is Extracellular. The chain crosses the membrane as a helical span at residues 522–542 (LYFSMILSSTTLITVFTVSWF). The Cytoplasmic segment spans residues 543–652 (TETPSKEMVS…SLEENPLVKT (110 aa)). Residues 653-673 (LLDVNCIVCISCAIFLWGYFA) traverse the membrane as a helical segment.

It belongs to the sodium:solute symporter (SSF) (TC 2.A.21) family. In terms of tissue distribution, expressed in kidney and small intestine.

The protein localises to the membrane. Its subcellular location is the apical cell membrane. It catalyses the reaction myo-inositol(out) + 2 Na(+)(out) = myo-inositol(in) + 2 Na(+)(in). It carries out the reaction 1D-chiro-inositol(out) + 2 Na(+)(out) = 1D-chiro-inositol(in) + 2 Na(+)(in). The catalysed reaction is D-glucose(out) + 2 Na(+)(out) = D-glucose(in) + 2 Na(+)(in). The enzyme catalyses D-xylose(out) + 2 Na(+)(out) = D-xylose(in) + 2 Na(+)(in). With respect to regulation, MI transport activity inhibited by D-chiro-inositol (DCI), phlorizin (Pz) and sodium (Na(+)). Insulin increases D-chiro-inositol uptake. Functionally, involved in the sodium-dependent cotransport of myo-inositol (MI) with a Na(+):MI stoichiometry of 2:1. Exclusively responsible for apical MI transport and absorption in intestine. Can also transport D-chiro-inositol (DCI) but not L-fucose. Exhibits stereospecific cotransport of both D-glucose and D-xylose. May induce apoptosis through the TNF-alpha, PDCD1 pathway. May play a role in the regulation of MI concentration in serum, involving reabsorption in at least the proximal tubule of the kidney. The polypeptide is Sodium/myo-inositol cotransporter 2 (Rattus norvegicus (Rat)).